The primary structure comprises 433 residues: ATP-dependent RNA helicase SUB2 (433 aa).

Residues 49–77 carry the Q motif motif; the sequence is TGFRDFLLKPELLRAIGDCGFEHPSEVQQ. One can recognise a Helicase ATP-binding domain in the interval 80 to 255; the sequence is IPQSILGTDV…KKFMQNPLEI (176 aa). 93 to 100 serves as a coordination point for ATP; that stretch reads AKSGLGKT. Residues 202–205 carry the DEAD box motif; sequence DECD. Positions 267–428 constitute a Helicase C-terminal domain; sequence GLQQYYIKLE…EFPEEGVDPS (162 aa).

This sequence belongs to the DEAD box helicase family. DECD subfamily.

The protein resides in the nucleus. The catalysed reaction is ATP + H2O = ADP + phosphate + H(+). Functionally, ATP-binding RNA helicase involved in transcription elongation and required for the export of mRNA out of the nucleus. SUB2 also plays a role in pre-mRNA splicing and spliceosome assembly. May be involved in rDNA and telomeric silencing, and maintenance of genome integrity. The polypeptide is ATP-dependent RNA helicase SUB2 (SUB2) (Scheffersomyces stipitis (strain ATCC 58785 / CBS 6054 / NBRC 10063 / NRRL Y-11545) (Yeast)).